We begin with the raw amino-acid sequence, 173 residues long: MPAPQKDGPRANRDIRGVREVQLIDDTGQNRGVVPFFDALNLAEEVGLDLVEIAPNSVPPVCKLLDYGRFRFNEQKKQNEARKRQKTVEVKEIKLRPGIDKHDYDTKMKSVHRFFEEGDKVKVTLRFRGREMAHQDIGLRLLERVKSETAEIAKVESEPMLEGRQMIMILAPR.

Belongs to the IF-3 family. In terms of assembly, monomer.

It localises to the cytoplasm. IF-3 binds to the 30S ribosomal subunit and shifts the equilibrium between 70S ribosomes and their 50S and 30S subunits in favor of the free subunits, thus enhancing the availability of 30S subunits on which protein synthesis initiation begins. This is Translation initiation factor IF-3 from Methylobacterium radiotolerans (strain ATCC 27329 / DSM 1819 / JCM 2831 / NBRC 15690 / NCIMB 10815 / 0-1).